A 285-amino-acid polypeptide reads, in one-letter code: Glutamate racemase (285 aa).

Residues 28-29 and 60-61 contribute to the substrate site; these read DS and YG. The active-site Proton donor/acceptor is the cysteine 92. Residue 93 to 94 coordinates substrate; it reads NT. Cysteine 204 acts as the Proton donor/acceptor in catalysis. Residue 205–206 coordinates substrate; it reads TH.

The protein belongs to the aspartate/glutamate racemases family.

The enzyme catalyses L-glutamate = D-glutamate. The protein operates within cell wall biogenesis; peptidoglycan biosynthesis. Functionally, provides the (R)-glutamate required for cell wall biosynthesis. The polypeptide is Glutamate racemase (Escherichia coli O6:H1 (strain CFT073 / ATCC 700928 / UPEC)).